Consider the following 462-residue polypeptide: Argininosuccinate lyase (462 aa).

This sequence belongs to the lyase 1 family. Argininosuccinate lyase subfamily.

It localises to the cytoplasm. It catalyses the reaction 2-(N(omega)-L-arginino)succinate = fumarate + L-arginine. It participates in amino-acid biosynthesis; L-arginine biosynthesis; L-arginine from L-ornithine and carbamoyl phosphate: step 3/3. This Bacillus thuringiensis (strain Al Hakam) protein is Argininosuccinate lyase.